Here is a 77-residue protein sequence, read N- to C-terminus: VpAmp2.0 (77 aa).

A signal peptide spans 1–23 (MQLRKALLVIFVAYLLVTDEAEA). A propeptide spanning residues 49 to 77 (RKREIEDLFDPYQKDLDLQRLDRFFSQFQ) is cleaved from the precursor.

The protein belongs to the non-disulfide-bridged peptide (NDBP) superfamily. Medium-length antimicrobial peptide (group 3) family. Expressed by the venom gland.

It localises to the secreted. Its subcellular location is the target cell membrane. Antimicrobial peptide with potent activity against Gram-positive bacteria S.aureus (MIC=10 uM) and S.agalactiaea (MIC=15 uM), and Gram-negative bacteria E.coli (MIC=24 uM) and P.aeruginosa (MIC=15 uM), as well as against yeasts Candida albicans (MIC=3.1 uM) and C.glabrata (MIC=25 uM). Also elicits low hemolysis on human erythrocytes (HC(50)=167 uM). This is VpAmp2.0 from Mesomexovis punctatus (Scorpion).